A 93-amino-acid chain; its full sequence is Small ribosomal subunit protein uS19 (93 aa).

It belongs to the universal ribosomal protein uS19 family.

Protein S19 forms a complex with S13 that binds strongly to the 16S ribosomal RNA. This is Small ribosomal subunit protein uS19 from Pseudarthrobacter chlorophenolicus (strain ATCC 700700 / DSM 12829 / CIP 107037 / JCM 12360 / KCTC 9906 / NCIMB 13794 / A6) (Arthrobacter chlorophenolicus).